The sequence spans 287 residues: Pantothenate synthetase (287 aa).

Methionine 30–histidine 37 contributes to the ATP binding site. Histidine 37 (proton donor) is an active-site residue. Residue glutamine 61 participates in (R)-pantoate binding. Position 61 (glutamine 61) interacts with beta-alanine. Position 147 to 150 (glycine 147 to aspartate 150) interacts with ATP. Glutamine 153 serves as a coordination point for (R)-pantoate. ATP is bound at residue methionine 184–arginine 187.

The protein belongs to the pantothenate synthetase family. Homodimer.

The protein resides in the cytoplasm. The catalysed reaction is (R)-pantoate + beta-alanine + ATP = (R)-pantothenate + AMP + diphosphate + H(+). It functions in the pathway cofactor biosynthesis; (R)-pantothenate biosynthesis; (R)-pantothenate from (R)-pantoate and beta-alanine: step 1/1. Catalyzes the condensation of pantoate with beta-alanine in an ATP-dependent reaction via a pantoyl-adenylate intermediate. In Granulibacter bethesdensis (strain ATCC BAA-1260 / CGDNIH1), this protein is Pantothenate synthetase.